The chain runs to 1553 residues: Pre-mRNA cleavage complex 2 protein Pcf11 (1553 aa).

S2 is subject to N-acetylserine. The CID domain occupies 14–142; sequence AREDACRDYQ…ALDVRVNSLD (129 aa). S120 bears the Phosphoserine mark. T121 is modified (phosphothreonine). The segment at 167–186 is disordered; sequence NKSPDEPSTPGTVVSSPSIS. Phosphoserine is present on residues S169 and S182. Over residues 174–186 the composition is skewed to low complexity; that stretch reads STPGTVVSSPSIS. Residues 208–235 adopt a coiled-coil conformation; that stretch reads LLAKQKQLLELQQKKLELELEQAKAQLA. The interval 265-648 is disordered; it reads AVKTPHQVPV…KQQHRLSVDA (384 aa). Residue K291 forms a Glycyl lysine isopeptide (Lys-Gly) (interchain with G-Cter in SUMO2) linkage. Residues 308–318 show a composition bias toward basic and acidic residues; the sequence is HGKEQSHRKEF. Residues 321-342 show a composition bias toward polar residues; sequence NTINQSDIKTSKNVPSEKLNSS. K329 is covalently cross-linked (Glycyl lysine isopeptide (Lys-Gly) (interchain with G-Cter in SUMO2)). 3 stretches are compositionally biased toward basic and acidic residues: residues 343–365, 381–422, and 428–443; these read KQEK…DSKS, HTKD…DVKE, and EKKE…EHRV. Residue K457 forms a Glycyl lysine isopeptide (Lys-Gly) (interchain with G-Cter in SUMO2) linkage. A compositionally biased stretch (basic residues) spans 476–487; that stretch reads STRKRSRSRSPK. S490, S495, S510, and S512 each carry phosphoserine. Positions 495–509 are enriched in basic residues; that stretch reads SPKRRDRRSPKRRQR. 2 stretches are compositionally biased toward basic and acidic residues: residues 530 to 568 and 600 to 616; these read SHME…DRPQ and SGWE…EHSK. A Phosphoserine modification is found at S645. K654 participates in a covalent cross-link: Glycyl lysine isopeptide (Lys-Gly) (interchain with G-Cter in SUMO2). The residue at position 705 (S705) is a Phosphoserine. A disordered region spans residues 707–733; the sequence is FNDRFPLKRPRYEDSDKPFVDGPASRF. The segment covering 716–725 has biased composition (basic and acidic residues); the sequence is PRYEDSDKPF. K723 is covalently cross-linked (Glycyl lysine isopeptide (Lys-Gly) (interchain with G-Cter in SUMO2)). Residue S777 is modified to Phosphoserine. Position 785 is a phosphothreonine (T785). S794 is modified (phosphoserine). 3 positions are modified to asymmetric dimethylarginine: R805, R820, and R833. Position 851 is a phosphoserine (S851). The interval 921 to 940 is disordered; that stretch reads HGPSGAAIRFDGPHGQPGGG. Residues R929, R944, R957, R982, R995, R1008, R1092, and R1103 each carry the asymmetric dimethylarginine modification. K1276 is covalently cross-linked (Glycyl lysine isopeptide (Lys-Gly) (interchain with G-Cter in SUMO2)). The segment at 1286 to 1313 is disordered; the sequence is DSATAQVTEAVAQPPPEEDEDQNEDQDV. Acidic residues predominate over residues 1301–1313; it reads PEEDEDQNEDQDV. Residues K1417, K1509, K1522, and K1544 each participate in a glycyl lysine isopeptide (Lys-Gly) (interchain with G-Cter in SUMO2) cross-link. The disordered stretch occupies residues 1516–1553; that stretch reads CESPKVKEEQIDAPPACSEESVATPTEIKTESDTVESV.

As to quaternary structure, associates with the phosphorylated CTD domain of POLR2A /RNA polymerase II. In terms of processing, phosphorylation at Ser-120 and/or Thr-121 by WNK1 weakens its association with POLR2A/RNA polymerase II, promoting transcript release from the chromatin template and mRNA export to the cytoplasm.

Its subcellular location is the nucleus. Its function is as follows. Component of pre-mRNA cleavage complex II, which promotes transcription termination by RNA polymerase II. This Mus musculus (Mouse) protein is Pre-mRNA cleavage complex 2 protein Pcf11.